Here is a 750-residue protein sequence, read N- to C-terminus: Tegument protein UL46 homolog (750 aa).

Disordered regions lie at residues 437 to 484, 525 to 593, 610 to 669, and 692 to 750; these read FCCP…SPRT, QRSD…DYMR, YTPY…EVVY, and SASR…VSSL. The segment covering 465 to 484 has biased composition (polar residues); it reads LRSSRQLPTSPPSNIVSPRT. Low complexity predominate over residues 528-540; it reads DSSSSDNSTCSST. A compositionally biased stretch (polar residues) spans 541–553; that stretch reads ETQYITLPSTPSP. Basic and acidic residues-rich tracts occupy residues 710 to 727 and 739 to 750; these read VCRE…DGFI and KHPDQTERVSSL.

This sequence belongs to the herpesviridae HHV-1 VP11/12 protein family.

Its subcellular location is the virion tegument. It localises to the host cell membrane. Functionally, modulates alpha trans-inducing factor-dependent activation of alpha genes. This chain is Tegument protein UL46 homolog, found in Equine herpesvirus 1 (strain V592) (EHV-1).